The chain runs to 191 residues: Molybdenum cofactor guanylyltransferase (191 aa).

Residues 13 to 15 (LAG), K26, D72, and D102 each bind GTP. D102 serves as a coordination point for Mg(2+).

The protein belongs to the MobA family. In terms of assembly, monomer. The cofactor is Mg(2+).

It localises to the cytoplasm. It carries out the reaction Mo-molybdopterin + GTP + H(+) = Mo-molybdopterin guanine dinucleotide + diphosphate. In terms of biological role, transfers a GMP moiety from GTP to Mo-molybdopterin (Mo-MPT) cofactor (Moco or molybdenum cofactor) to form Mo-molybdopterin guanine dinucleotide (Mo-MGD) cofactor. The sequence is that of Molybdenum cofactor guanylyltransferase from Pseudomonas putida (strain GB-1).